Reading from the N-terminus, the 124-residue chain is MPTINQLVRQGRKPVKYKSAAPALEGNPQKRGVCVVVKTTTPKKPNSALRKIARVRLTNGTEVTAYIPGIGHNLQEHSVVLVRGGRVKDLPGVRYKIIRGALDAAGVANRKQARSRYGAKKPKK.

Asp89 bears the 3-methylthioaspartic acid mark.

The protein belongs to the universal ribosomal protein uS12 family. In terms of assembly, part of the 30S ribosomal subunit. Contacts proteins S8 and S17. May interact with IF1 in the 30S initiation complex.

With S4 and S5 plays an important role in translational accuracy. Functionally, interacts with and stabilizes bases of the 16S rRNA that are involved in tRNA selection in the A site and with the mRNA backbone. Located at the interface of the 30S and 50S subunits, it traverses the body of the 30S subunit contacting proteins on the other side and probably holding the rRNA structure together. The combined cluster of proteins S8, S12 and S17 appears to hold together the shoulder and platform of the 30S subunit. This Thermoanaerobacter pseudethanolicus (strain ATCC 33223 / 39E) (Clostridium thermohydrosulfuricum) protein is Small ribosomal subunit protein uS12.